The following is a 142-amino-acid chain: Putative pre-16S rRNA nuclease (142 aa).

Belongs to the YqgF nuclease family.

It localises to the cytoplasm. Could be a nuclease involved in processing of the 5'-end of pre-16S rRNA. This is Putative pre-16S rRNA nuclease from Mycoplasmoides gallisepticum (strain R(low / passage 15 / clone 2)) (Mycoplasma gallisepticum).